We begin with the raw amino-acid sequence, 86 residues long: Large ribosomal subunit protein bL27 (86 aa).

A disordered region spans residues 1-21; the sequence is MAHKKGGGSSRNGRDSESKRL.

This sequence belongs to the bacterial ribosomal protein bL27 family.

The protein is Large ribosomal subunit protein bL27 of Rubrobacter xylanophilus (strain DSM 9941 / JCM 11954 / NBRC 16129 / PRD-1).